A 203-amino-acid polypeptide reads, in one-letter code: Peptide deformylase (203 aa).

Positions 121 and 163 each coordinate Fe cation. The active site involves E164. H167 lines the Fe cation pocket.

This sequence belongs to the polypeptide deformylase family. Requires Fe(2+) as cofactor.

It catalyses the reaction N-terminal N-formyl-L-methionyl-[peptide] + H2O = N-terminal L-methionyl-[peptide] + formate. In terms of biological role, removes the formyl group from the N-terminal Met of newly synthesized proteins. Requires at least a dipeptide for an efficient rate of reaction. N-terminal L-methionine is a prerequisite for activity but the enzyme has broad specificity at other positions. The polypeptide is Peptide deformylase (Prochlorococcus marinus (strain MIT 9515)).